The chain runs to 1642 residues: Cholesterol transporter ABCA5 (1642 aa).

Residues 32-52 (SVQEILFPLFFLFWLILVSMM) form a helical membrane-spanning segment. An N-linked (GlcNAc...) asparagine glycan is attached at N86. The next 5 helical transmembrane spans lie at 220-240 (VILI…AIHI), 264-284 (LSWV…MAVI), 297-317 (IVIF…ALML), 328-348 (GVVE…IVLI), and 355-375 (LVWL…AQVM). N-linked (GlcNAc...) asparagine glycosylation is present at N388. The chain crosses the membrane as a helical span at residues 396–416 (LIITIIMLALDSVFYVLLAVY). N-linked (GlcNAc...) asparagine glycosylation occurs at N458. An ABC transporter 1 domain is found at 478–713 (IRISGIQKSY…WGIGYRLSMY (236 aa)). ATP is bound at residue 514-521 (GHSGTGKS). A helical membrane pass occupies residues 864-884 (AVLLLLLIFFAVQIFMFFLHH). A glycan (N-linked (GlcNAc...) asparagine) is linked at N919. A helical transmembrane segment spans residues 967–987 (VFSAVFNSTMVYCLPVMMNII). N-linked (GlcNAc...) asparagine glycosylation occurs at N996. 6 consecutive transmembrane segments (helical) span residues 1021 to 1041 (LYFQ…YFAM), 1071 to 1091 (VVDI…LFAF), 1102 to 1122 (FLAV…FTYI), 1138 to 1158 (SFIY…TFFL), 1164 to 1184 (AVFH…GCLI), and 1207 to 1227 (LLVA…LLQH). One can recognise an ABC transporter 2 domain in the interval 1290-1533 (IMVCNLHKEY…FGKGYFLEIK (244 aa)). 1333 to 1340 (GPNGAGKS) is an ATP binding site.

The protein belongs to the ABC transporter superfamily. ABCA family. In terms of processing, N-glycosylated. As to expression, expressed in cardiomyocytes, oligodendrocytes and astrocytes in brain, alveolar type 2 cells in lung and follicular cells in the thyroid gland (at protein level). Detected in brain, testis, lung, heart, liver, kidney, skeletal muscle and placenta. Strongly expressed in the basal cells of the seminiferous tubules, interstitial cells consisting of Leydig cells, as well as the tunica albuginea. In the epididymis, specifically and very strongly expressed in the connective tissue outlining the cylindrical epithelium in the corpus and cauda regions, including fibrocytes and smooth muscle cells, as well as within the basal and tall columnar cells of the corpus cylindrical epithelium. Highly expressed in the brain with high expression in cortical and hippocampal neurons and moderately in the lung.

It localises to the golgi apparatus membrane. The protein resides in the lysosome membrane. The protein localises to the late endosome membrane. Its subcellular location is the cell membrane. The enzyme catalyses cholesterol(in) + ATP + H2O = cholesterol(out) + ADP + phosphate + H(+). Cholesterol efflux transporter in macrophages that is responsible for APOAI/high-density lipoproteins (HDL) formation at the plasma membrane under high cholesterol levels and participates in reverse cholesterol transport. May play a role in the processing of autolysosomes. This Mus musculus (Mouse) protein is Cholesterol transporter ABCA5.